The sequence spans 229 residues: Large ribosomal subunit protein uL1 (229 aa).

This sequence belongs to the universal ribosomal protein uL1 family. As to quaternary structure, part of the 50S ribosomal subunit.

Functionally, binds directly to 23S rRNA. The L1 stalk is quite mobile in the ribosome, and is involved in E site tRNA release. Protein L1 is also a translational repressor protein, it controls the translation of the L11 operon by binding to its mRNA. In Lactiplantibacillus plantarum (strain ATCC BAA-793 / NCIMB 8826 / WCFS1) (Lactobacillus plantarum), this protein is Large ribosomal subunit protein uL1.